The following is a 119-amino-acid chain: Small ribosomal subunit protein uS13 (119 aa).

A compositionally biased stretch (basic residues) spans 94–113 (GLPVRGQRTKTNARTRKGPR). A disordered region spans residues 94–119 (GLPVRGQRTKTNARTRKGPRKAIGAK).

The protein belongs to the universal ribosomal protein uS13 family. As to quaternary structure, part of the 30S ribosomal subunit. Forms a loose heterodimer with protein S19. Forms two bridges to the 50S subunit in the 70S ribosome.

In terms of biological role, located at the top of the head of the 30S subunit, it contacts several helices of the 16S rRNA. In the 70S ribosome it contacts the 23S rRNA (bridge B1a) and protein L5 of the 50S subunit (bridge B1b), connecting the 2 subunits; these bridges are implicated in subunit movement. Contacts the tRNAs in the A and P-sites. The polypeptide is Small ribosomal subunit protein uS13 (Nitrosomonas europaea (strain ATCC 19718 / CIP 103999 / KCTC 2705 / NBRC 14298)).